The chain runs to 754 residues: Ubiquitin carboxyl-terminal hydrolase 9 (754 aa).

Over residues methionine 1–histidine 14 the composition is skewed to basic residues. Positions methionine 1–leucine 76 are disordered. Low complexity predominate over residues serine 42 to serine 58. A USP domain is found at phenylalanine 134 to threonine 667. Residue cysteine 143 is the Nucleophile of the active site. Residues glutamate 194–asparagine 209 show a composition bias toward polar residues. The segment at glutamate 194 to proline 273 is disordered. Positions glutamine 222–glutamine 233 are enriched in low complexity. Residues glycine 250–glutamine 272 show a composition bias toward basic and acidic residues. Residue histidine 618 is the Proton acceptor of the active site. Residues valine 726–lysine 754 form a disordered region. Basic and acidic residues predominate over residues lysine 727–lysine 738. The span at lysine 739–arginine 748 shows a compositional bias: basic residues.

It belongs to the peptidase C19 family.

It catalyses the reaction Thiol-dependent hydrolysis of ester, thioester, amide, peptide and isopeptide bonds formed by the C-terminal Gly of ubiquitin (a 76-residue protein attached to proteins as an intracellular targeting signal).. This chain is Ubiquitin carboxyl-terminal hydrolase 9 (UBP9), found in Saccharomyces cerevisiae (strain ATCC 204508 / S288c) (Baker's yeast).